The sequence spans 244 residues: 1-(5-phosphoribosyl)-5-[(5-phosphoribosylamino)methylideneamino] imidazole-4-carboxamide isomerase (244 aa).

Residue aspartate 10 is the Proton acceptor of the active site. Aspartate 132 serves as the catalytic Proton donor.

Belongs to the HisA/HisF family.

It localises to the cytoplasm. It carries out the reaction 1-(5-phospho-beta-D-ribosyl)-5-[(5-phospho-beta-D-ribosylamino)methylideneamino]imidazole-4-carboxamide = 5-[(5-phospho-1-deoxy-D-ribulos-1-ylimino)methylamino]-1-(5-phospho-beta-D-ribosyl)imidazole-4-carboxamide. Its pathway is amino-acid biosynthesis; L-histidine biosynthesis; L-histidine from 5-phospho-alpha-D-ribose 1-diphosphate: step 4/9. This Stenotrophomonas maltophilia (strain R551-3) protein is 1-(5-phosphoribosyl)-5-[(5-phosphoribosylamino)methylideneamino] imidazole-4-carboxamide isomerase.